The following is a 263-amino-acid chain: 2-keto-4-pentenoate hydratase 1 (263 aa).

This sequence belongs to the hydratase/decarboxylase family. MhpD subfamily. The cofactor is a divalent metal cation.

The enzyme catalyses (S)-4-hydroxy-2-oxopentanoate = (2Z)-2-hydroxypenta-2,4-dienoate + H2O. The protein operates within aromatic compound metabolism; 3-phenylpropanoate degradation. Functionally, catalyzes the conversion of 2-hydroxypentadienoic acid (enolic form of 2-oxopent-4-enoate) to 4-hydroxy-2-ketopentanoic acid. This is 2-keto-4-pentenoate hydratase 1 from Dechloromonas aromatica (strain RCB).